The chain runs to 157 residues: Ciliary microtubule inner protein 5 (157 aa).

2 disordered regions span residues 1–57 (MGSR…SALG) and 92–124 (DPMG…AVGS). The segment covering 92–109 (DPMGNKKEPVKLPDHVPR) has biased composition (basic and acidic residues).

It localises to the cell projection. Its subcellular location is the cilium. The chain is Ciliary microtubule inner protein 5 (CIMIP5) from Bos taurus (Bovine).